An 833-amino-acid polypeptide reads, in one-letter code: RNA-binding protein 5-A (833 aa).

The disordered stretch occupies residues 1–87; it reads MGSDKRVSRS…GYHSDGDYMD (87 aa). The 81-residue stretch at 102 to 182 folds into the RRM 1 domain; it reads KTIMLRGLPI…KTIAMHYSNP (81 aa). A RanBP2-type zinc finger spans residues 185 to 214; sequence KFEDWLCNKCGLYNFRRRLKCFRCGAAKAE. An RRM 2 domain is found at 241 to 325; the sequence is SAIILRNIGP…KTIGVDFAKS (85 aa). A compositionally biased stretch (polar residues) spans 396–428; it reads TGAAEQGTAPQAESSSPVPATTSAVVCQSPQMY. Disordered stretches follow at residues 396–458 and 523–559; these read TGAA…EEAA and AADGAGQSGTQPNGANPGTSKEGKEKKEKPKSKTAQQ. Low complexity predominate over residues 429–458; that stretch reads QQPGSPTQSSTSTVAASATPASGTSAEEAA. A C2H2-type zinc finger spans residues 667 to 692; the sequence is LACLLCRRQFPNKDALTRHQQLSDLH. A G-patch domain is found at 761 to 807; sequence NSNIGNKMLQAMGWKEGSGLGRKSQGITAPIQAQVRMRGAGLGAKGS.

It belongs to the RBM5/RBM10 family. As to quaternary structure, component of the spliceosome A complex (also known as the prespliceosome). Appears to dissociate from the spliceosome upon formation of the spliceosome B complex (also known as the precatalytic spliceosome), in which the heterotrimeric U4/U6.U5 snRNPs are bound.

Its subcellular location is the nucleus. Its function is as follows. Component of the spliceosome A complex. Regulates alternative splicing of a number of mRNAs. May modulate splice site pairing after recruitment of the U1 and U2 snRNPs to the 5' and 3' splice sites of the intron. This is RNA-binding protein 5-A (rbm5-a) from Xenopus laevis (African clawed frog).